Here is a 189-residue protein sequence, read N- to C-terminus: Elongation factor P (189 aa).

The protein belongs to the elongation factor P family.

It is found in the cytoplasm. Its pathway is protein biosynthesis; polypeptide chain elongation. Involved in peptide bond synthesis. Stimulates efficient translation and peptide-bond synthesis on native or reconstituted 70S ribosomes in vitro. Probably functions indirectly by altering the affinity of the ribosome for aminoacyl-tRNA, thus increasing their reactivity as acceptors for peptidyl transferase. The protein is Elongation factor P of Orientia tsutsugamushi (strain Boryong) (Rickettsia tsutsugamushi).